Here is a 469-residue protein sequence, read N- to C-terminus: MIALLPFILSLAATFINIFLCVTNISKRYSINLNILFWVIIFISFFIVRSNFSNDFLMDFATPFISLDEFSFCFGVVLSALMIIFLISSFYSDDEKFYKQEMFALASLAGFGLLAMSLSVELILTLIFLEVASISIYAMIAMNSIEYKSVEAAFKYFLLSSFMSAFYLLGAAFVFGVAGSTKYSFIATGLNSDFLSIIGMILVLSMMFFKIAIFGFYRWSIDVYYGSNLNIAGFLASAFKLASFAILIKLCFLYPGNNIEILQGIFAILAILSMFAGNLLSLKETNVKKILIAAGIVHSGYIFINLSSVGASVSIYPAIFYLSTYTIVVGFLFAILNGLFGDREIKISDLNGLYKVRPTEAFAFTVICLSFIGFPYSVGFLGKLFIFSSAVESGKTYLAIFGIINTIFSVYYYLKIIISIYFSENKTALSCADSKKFGLKLLALSSILFIILEGSGIFSIISFLNLFIR.

14 helical membrane-spanning segments follow: residues 2-22 (IALLPFILSLAATFINIFLCV), 28-48 (RYSINLNILFWVIIFISFFIV), 70-90 (FSFCFGVVLSALMIIFLISSF), 101-121 (EMFALASLAGFGLLAMSLSVE), 122-142 (LILTLIFLEVASISIYAMIAM), 157-177 (FLLSSFMSAFYLLGAAFVFGV), 194-214 (FLSIIGMILVLSMMFFKIAIF), 233-253 (GFLASAFKLASFAILIKLCFL), 261-281 (ILQGIFAILAILSMFAGNLLS), 290-310 (ILIAAGIVHSGYIFINLSSVG), 315-335 (IYPAIFYLSTYTIVVGFLFAI), 361-381 (AFAFTVICLSFIGFPYSVGFL), 398-418 (LAIFGIINTIFSVYYYLKIII), and 447-467 (ILFIILEGSGIFSIISFLNLF).

Belongs to the complex I subunit 2 family. NDH-1 is composed of 14 different subunits. Subunits NuoA, H, J, K, L, M, N constitute the membrane sector of the complex.

Its subcellular location is the cell inner membrane. It carries out the reaction a quinone + NADH + 5 H(+)(in) = a quinol + NAD(+) + 4 H(+)(out). Functionally, NDH-1 shuttles electrons from NADH, via FMN and iron-sulfur (Fe-S) centers, to quinones in the respiratory chain. The immediate electron acceptor for the enzyme in this species is believed to be ubiquinone. Couples the redox reaction to proton translocation (for every two electrons transferred, four hydrogen ions are translocated across the cytoplasmic membrane), and thus conserves the redox energy in a proton gradient. The chain is NADH-quinone oxidoreductase subunit N from Campylobacter fetus subsp. fetus (strain 82-40).